We begin with the raw amino-acid sequence, 177 residues long: Adenine phosphoribosyltransferase (177 aa).

The protein belongs to the purine/pyrimidine phosphoribosyltransferase family. As to quaternary structure, homodimer.

Its subcellular location is the cytoplasm. The enzyme catalyses AMP + diphosphate = 5-phospho-alpha-D-ribose 1-diphosphate + adenine. It participates in purine metabolism; AMP biosynthesis via salvage pathway; AMP from adenine: step 1/1. Functionally, catalyzes a salvage reaction resulting in the formation of AMP, that is energically less costly than de novo synthesis. This is Adenine phosphoribosyltransferase from Anaeromyxobacter sp. (strain Fw109-5).